A 255-amino-acid chain; its full sequence is Very-long-chain (3R)-3-hydroxyacyl-CoA dehydratase 2 (255 aa).

The Cytoplasmic portion of the chain corresponds to 3-42; it reads AAAAATAAAKGNGGGGGRAGAGDASGTRKKKGPGPLATAY. Residues 11-34 form a disordered region; it reads AKGNGGGGGRAGAGDASGTRKKKG. Over residues 13–22 the composition is skewed to gly residues; that stretch reads GNGGGGGRAG. Residues 43 to 61 traverse the membrane as a helical segment; it reads LVIYNVVMTAGWLVIAVGL. At 62–80 the chain is on the lumenal side; sequence VRAYLAKGSYHSLYYSIEK. The chain crosses the membrane as a helical span at residues 81-98; it reads PLKFFQTGALLEILHCAI. Over 99-108 the chain is Cytoplasmic; the sequence is GIVPSSVVLT. The helical transmembrane segment at 109-126 threads the bilayer; that stretch reads SFQVMSRVFLIWAVTHSV. The Lumenal segment spans residues 127–131; sequence KEVQS. Residues 132–147 form a helical membrane-spanning segment; that stretch reads EDSVLLFVIAWTITEI. The Cytoplasmic portion of the chain corresponds to 148-170; it reads IRYSFYTFSLLNHLPYLIKWARY. Residues 171–188 traverse the membrane as a helical segment; it reads TLFIVLYPMGVSGELLTI. Active-site residues include tyrosine 177 and glutamate 184. At 189-218 the chain is on the lumenal side; the sequence is YAALPFVRQAGLYSISLPNKYNFSFDYYAF. The interval 199–215 is may be involved in interaction with TECR; it reads GLYSISLPNKYNFSFDY. N-linked (GlcNAc...) asparagine glycosylation is present at asparagine 210. A helical transmembrane segment spans residues 219–236; the sequence is LILIMISYIPIFPQLYFH. Topologically, residues 237–255 are cytoplasmic; it reads MIHQRRKILSHTEEHKKFE.

The protein belongs to the very long-chain fatty acids dehydratase HACD family. May interact with enzymes of the ELO family (including ELOVL1); with those enzymes that mediate condensation, the first of the four steps of the reaction cycle responsible for fatty acids elongation, may be part of a larger fatty acids elongase complex. Interacts with BCAP31. Interacts (via the third lumenal loop) with TECR.

The protein resides in the endoplasmic reticulum membrane. The catalysed reaction is a very-long-chain (3R)-3-hydroxyacyl-CoA = a very-long-chain (2E)-enoyl-CoA + H2O. It catalyses the reaction (3R)-hydroxyhexadecanoyl-CoA = (2E)-hexadecenoyl-CoA + H2O. The enzyme catalyses (3R)-hydroxyoctadecanoyl-CoA = (2E)-octadecenoyl-CoA + H2O. It carries out the reaction (3R)-hydroxyeicosanoyl-CoA = (2E)-eicosenoyl-CoA + H2O. The catalysed reaction is (3R)-hydroxydocosanoyl-CoA = (2E)-docosenoyl-CoA + H2O. It catalyses the reaction (3R)-hydroxytetracosanoyl-CoA = (2E)-tetracosenoyl-CoA + H2O. The enzyme catalyses (3R)-hydroxyhexacosanoyl-CoA = (2E)-hexacosenoyl-CoA + H2O. It functions in the pathway lipid metabolism; fatty acid biosynthesis. Its function is as follows. Catalyzes the third of the very long-chain fatty acids (VLCFA) elongation four-step cycle (condensation, reduction, dehydration, and reduction). This endoplasmic reticulum-elongation process is characterized by the addition of two carbons to the lipid chain through each cycle. This enzyme catalyzes the dehydration of the 3-hydroxyacyl-CoA intermediate into trans-2,3-enoyl-CoA, within each cycle of elongation. Therefore, it participates in the production of various VLCFAs involved in multiple biological processes as precursors of membrane lipids and lipid mediators. The chain is Very-long-chain (3R)-3-hydroxyacyl-CoA dehydratase 2 from Pongo abelii (Sumatran orangutan).